The chain runs to 306 residues: Agmatinase (306 aa).

Residues H126, D149, H151, D153, D230, and D232 each coordinate Mn(2+).

The protein belongs to the arginase family. Agmatinase subfamily. The cofactor is Mn(2+).

The catalysed reaction is agmatine + H2O = urea + putrescine. It functions in the pathway amine and polyamine biosynthesis; putrescine biosynthesis via agmatine pathway; putrescine from agmatine: step 1/1. In terms of biological role, catalyzes the formation of putrescine from agmatine. This Escherichia coli O9:H4 (strain HS) protein is Agmatinase.